The primary structure comprises 266 residues: MSTATGVRAGRRFTVGRSEDATHPDTIRAAISEFIATAIFVFAAEGSVLSLGKMYHDHSTISTAGGLVAVALAHALGLAVAVAVAVNVSGGHVNPAVTFGALVGGRVSLVRAVLYWAAQLLGAVAATLLLRLATGGARPPGFALASGVGDGHAVLLEAVMTFGFVYAYYATVVDPKRGHLGTIAPLAVGFLLGANVLAGGPFDGAGMNPARVFGPALVGWRWRHHWVYWLGPFLGAGLAGLVYEYLLIPPADAVPHTHQPLAPEDY.

The next 2 helical transmembrane spans lie at 29–49 (AAIS…GSVL) and 66–86 (GLVA…AVAV). An NPA 1 motif is present at residues 94 to 96 (NPA). Helical transmembrane passes span 109–129 (LVRA…ATLL), 153–173 (AVLL…ATVV), and 180–200 (LGTI…LAGG). An NPA 2 motif is present at residues 208–210 (NPA). Residues 228-248 (YWLGPFLGAGLAGLVYEYLLI) form a helical membrane-spanning segment.

The protein belongs to the MIP/aquaporin (TC 1.A.8) family. TIP (TC 1.A.8.10) subfamily.

Its subcellular location is the vacuole membrane. In terms of biological role, aquaporins facilitate the transport of water and small neutral solutes across cell membranes. This is Aquaporin TIP3-2 (TIP3-2) from Zea mays (Maize).